The primary structure comprises 469 residues: Dihydrolipoyl dehydrogenase (469 aa).

FAD-binding positions include 40-48, Lys-57, and Ala-120; that span reads EKASLGGVC. Cys-48 and Cys-53 are joined by a disulfide. NAD(+) is bound by residues 186-190, Glu-209, and 275-278; these read GGGAI and AVGV. Residues Asp-317 and Ala-325 each contribute to the FAD site. The active-site Proton acceptor is the His-450.

This sequence belongs to the class-I pyridine nucleotide-disulfide oxidoreductase family. As to quaternary structure, homodimer. FAD is required as a cofactor.

Its subcellular location is the cytoplasm. The enzyme catalyses N(6)-[(R)-dihydrolipoyl]-L-lysyl-[protein] + NAD(+) = N(6)-[(R)-lipoyl]-L-lysyl-[protein] + NADH + H(+). Functionally, lipoamide dehydrogenase is a component of the alpha-ketoacid dehydrogenase complexes. This chain is Dihydrolipoyl dehydrogenase (lpd), found in Chlorobaculum parvum (strain DSM 263 / NCIMB 8327) (Chlorobium vibrioforme subsp. thiosulfatophilum).